A 188-amino-acid polypeptide reads, in one-letter code: dCTP deaminase (188 aa).

Residues 111-116 (KSTYAR), 135-137 (TLE), Gln-156, Tyr-170, and Gln-180 each bind dCTP. The active-site Proton donor/acceptor is Glu-137.

The protein belongs to the dCTP deaminase family. Homotrimer.

The enzyme catalyses dCTP + H2O + H(+) = dUTP + NH4(+). It functions in the pathway pyrimidine metabolism; dUMP biosynthesis; dUMP from dCTP (dUTP route): step 1/2. Functionally, catalyzes the deamination of dCTP to dUTP. This Pseudomonas savastanoi pv. phaseolicola (strain 1448A / Race 6) (Pseudomonas syringae pv. phaseolicola (strain 1448A / Race 6)) protein is dCTP deaminase.